The primary structure comprises 255 residues: Complement C1q-like protein 3 (255 aa).

The signal sequence occupies residues Met1–Ala20. Positions Lys39–Gly109 are disordered. In terms of domain architecture, Collagen-like spans Gly61–Asn111. The segment covering Arg75 to Pro89 has biased composition (pro residues). A C1q domain is found at Ser122–Asp255.

In terms of assembly, forms homooligomers. Interacts with ADGRB3. Forms heterooligomers with C1QL2 and C1QL4, when proteins are coexpressed; this interaction does not occur after secretion. As to expression, highly expressed in brain and white adipose tissue. In gonadal fat pad, expressed at lower levels in adipocytes than in the stromal vascular fraction (VSP), which contains preadipocytes, fibroblasts, endothelial cells and occasional immune cells. Expression exhibits sexually dimorphism, with higher levels in females than in males (at protein level). Tends to be up-regulated in adipose tissue from obese males, but not females. Expressed in glial cells.

The protein localises to the secreted. Functionally, may regulate the number of excitatory synapses that are formed on hippocampus neurons. Has no effect on inhibitory synapses. Plays a role in glucose homeostasis. Via AMPK signaling pathway, stimulates glucose uptake in adipocytes, myotubes and hepatocytes and enhances insulin-stimulated glucose uptake. In a hepatoma cell line, reduces the expression of gluconeogenic enzymes G6PC1 and PCK1 and hence decreases de novo glucose production. This chain is Complement C1q-like protein 3 (C1ql3), found in Mus musculus (Mouse).